We begin with the raw amino-acid sequence, 452 residues long: Cholesterol 7-desaturase nvd 2 (452 aa).

The next 2 helical transmembrane spans lie at 6–26 (LIRI…MGLC) and 32–52 (FPVM…ALVM). The Rieske domain maps to 107 to 212 (WFKVADSTWI…CCEVDGMAYL (106 aa)). 4 residues coordinate [2Fe-2S] cluster: C148, H150, C169, and H172.

The protein belongs to the cholesterol 7-desaturase family. [2Fe-2S] cluster is required as a cofactor.

It localises to the membrane. The catalysed reaction is cholesterol + NADPH + O2 + H(+) = 7-dehydrocholesterol + NADP(+) + 2 H2O. It carries out the reaction cholesterol + NADH + O2 + H(+) = 7-dehydrocholesterol + NAD(+) + 2 H2O. The protein operates within steroid hormone biosynthesis; dafachronic acid biosynthesis. Catalyzes the production of 7-dehydrocholesterol (7-DHC or cholesta-5,7-dien-3beta-ol) by inserting a double bond (desaturating) at the C7-C8 single bond of cholesterol. Essential regulator of steroid biosynthesis as this reaction is the first step in the synthesis of the steroid hormone Delta(7)-dafachronic acid. This Ciona intestinalis (Transparent sea squirt) protein is Cholesterol 7-desaturase nvd 2.